A 274-amino-acid polypeptide reads, in one-letter code: tRNA-cytidine(32) 2-sulfurtransferase (274 aa).

A PP-loop motif motif is present at residues 40–45 (SGGKDS). Positions 115, 118, and 206 each coordinate [4Fe-4S] cluster.

Belongs to the TtcA family. In terms of assembly, homodimer. It depends on Mg(2+) as a cofactor. [4Fe-4S] cluster serves as cofactor.

The protein resides in the cytoplasm. It catalyses the reaction cytidine(32) in tRNA + S-sulfanyl-L-cysteinyl-[cysteine desulfurase] + AH2 + ATP = 2-thiocytidine(32) in tRNA + L-cysteinyl-[cysteine desulfurase] + A + AMP + diphosphate + H(+). The protein operates within tRNA modification. Catalyzes the ATP-dependent 2-thiolation of cytidine in position 32 of tRNA, to form 2-thiocytidine (s(2)C32). The sulfur atoms are provided by the cysteine/cysteine desulfurase (IscS) system. The chain is tRNA-cytidine(32) 2-sulfurtransferase from Pseudomonas putida (strain W619).